The chain runs to 72 residues: Translation initiation factor IF-1 (72 aa).

An S1-like domain is found at 1 to 72; that stretch reads MAKDDVIEVD…DKGRITFRYK (72 aa).

Belongs to the IF-1 family. In terms of assembly, component of the 30S ribosomal translation pre-initiation complex which assembles on the 30S ribosome in the order IF-2 and IF-3, IF-1 and N-formylmethionyl-tRNA(fMet); mRNA recruitment can occur at any time during PIC assembly.

The protein localises to the cytoplasm. Functionally, one of the essential components for the initiation of protein synthesis. Stabilizes the binding of IF-2 and IF-3 on the 30S subunit to which N-formylmethionyl-tRNA(fMet) subsequently binds. Helps modulate mRNA selection, yielding the 30S pre-initiation complex (PIC). Upon addition of the 50S ribosomal subunit IF-1, IF-2 and IF-3 are released leaving the mature 70S translation initiation complex. This chain is Translation initiation factor IF-1, found in Wolinella succinogenes (strain ATCC 29543 / DSM 1740 / CCUG 13145 / JCM 31913 / LMG 7466 / NCTC 11488 / FDC 602W) (Vibrio succinogenes).